The chain runs to 132 residues: Small ribosomal subunit protein uS8c (132 aa).

The protein belongs to the universal ribosomal protein uS8 family. As to quaternary structure, part of the 30S ribosomal subunit.

The protein localises to the plastid. It is found in the chloroplast. One of the primary rRNA binding proteins, it binds directly to 16S rRNA central domain where it helps coordinate assembly of the platform of the 30S subunit. The chain is Small ribosomal subunit protein uS8c (rps8) from Buxus microphylla (Littleleaf boxwood).